Reading from the N-terminus, the 282-residue chain is tRNA pseudouridine synthase A (282 aa).

The active-site Nucleophile is the aspartate 53. Substrate is bound at residue tyrosine 119.

The protein belongs to the tRNA pseudouridine synthase TruA family. In terms of assembly, homodimer.

It carries out the reaction uridine(38/39/40) in tRNA = pseudouridine(38/39/40) in tRNA. Formation of pseudouridine at positions 38, 39 and 40 in the anticodon stem and loop of transfer RNAs. The protein is tRNA pseudouridine synthase A of Corynebacterium efficiens (strain DSM 44549 / YS-314 / AJ 12310 / JCM 11189 / NBRC 100395).